The sequence spans 313 residues: tRNA dimethylallyltransferase (313 aa).

9–16 (GPTASGKT) lines the ATP pocket. 11–16 (TASGKT) is a binding site for substrate. The tract at residues 34–37 (DSMQ) is interaction with substrate tRNA.

Belongs to the IPP transferase family. In terms of assembly, monomer. The cofactor is Mg(2+).

It catalyses the reaction adenosine(37) in tRNA + dimethylallyl diphosphate = N(6)-dimethylallyladenosine(37) in tRNA + diphosphate. Functionally, catalyzes the transfer of a dimethylallyl group onto the adenine at position 37 in tRNAs that read codons beginning with uridine, leading to the formation of N6-(dimethylallyl)adenosine (i(6)A). The polypeptide is tRNA dimethylallyltransferase (Acetivibrio thermocellus (strain ATCC 27405 / DSM 1237 / JCM 9322 / NBRC 103400 / NCIMB 10682 / NRRL B-4536 / VPI 7372) (Clostridium thermocellum)).